Reading from the N-terminus, the 131-residue chain is Aspartate 1-decarboxylase (131 aa).

Ser25 functions as the Schiff-base intermediate with substrate; via pyruvic acid in the catalytic mechanism. Pyruvic acid (Ser) is present on Ser25. Thr57 lines the substrate pocket. Residue Tyr58 is the Proton donor of the active site. Residue 73 to 75 (GAA) coordinates substrate.

This sequence belongs to the PanD family. Heterooctamer of four alpha and four beta subunits. Pyruvate is required as a cofactor. Post-translationally, is synthesized initially as an inactive proenzyme, which is activated by self-cleavage at a specific serine bond to produce a beta-subunit with a hydroxyl group at its C-terminus and an alpha-subunit with a pyruvoyl group at its N-terminus.

It localises to the cytoplasm. The catalysed reaction is L-aspartate + H(+) = beta-alanine + CO2. It participates in cofactor biosynthesis; (R)-pantothenate biosynthesis; beta-alanine from L-aspartate: step 1/1. Functionally, catalyzes the pyruvoyl-dependent decarboxylation of aspartate to produce beta-alanine. The protein is Aspartate 1-decarboxylase of Anaeromyxobacter sp. (strain Fw109-5).